Reading from the N-terminus, the 402-residue chain is MSSTPEAETMECGISSSKVHDSKTNTTYGIIHNSINGTDTTLFDTFPDSTDNAEVTGDVDDVKTESSPESQSEDLSPFGNDGNESPETVTDIDAVSAVRMQYNIVSSLPPGSEGYIYVCTKRGDNTKRKVIVKAVTGGKTLGSEIDILKKMSHRSIIRLVHAYRWKSTVCMVMPKYKCDLFTYIDIMGPLPLNQIITIERGLLGALAYIHEKGIIHRDVKTENIFLDKPENVVLGDFGAACKLDEHTDKPKCYGWSGTLETNSPELLALDPYCTKTDIWSAGLVLFEMSVKNITFFGKQVNGSGSQLRSIIRCLQVHPLEFPQNNSTNLCKHFKQYAIQLRHPYAIPQIIRKSGMTMDLEYAIAKMLTFDQEFRPSAQDILMLPLFTKEPADALYTITAAHM.

Disordered stretches follow at residues 1 to 21 and 46 to 88; these read MSST…KVHD and FPDS…SPET. One can recognise a Protein kinase domain in the interval 102–386; the sequence is YNIVSSLPPG…AQDILMLPLF (285 aa). Residues 110-118 and Lys127 contribute to the ATP site; that span reads PGSEGYIYV. Asp218 (proton acceptor) is an active-site residue.

The protein belongs to the protein kinase superfamily. Ser/Thr protein kinase family. Phosphorylated by UL13 homolog; this phosphorylation regulates subsequent phosphorylation of UL31 and UL34 homologs by US3. Autophosphorylated.

Its subcellular location is the host cytoplasm. The protein localises to the host nucleus. The enzyme catalyses L-seryl-[protein] + ATP = O-phospho-L-seryl-[protein] + ADP + H(+). It catalyses the reaction L-threonyl-[protein] + ATP = O-phospho-L-threonyl-[protein] + ADP + H(+). In terms of biological role, multifunctional serine/threonine kinase that plays a role in several processes including egress of virus particles from the nucleus, modulation of the actin cytoskeleton and inhibition of apoptosis. Phosphorylates UL31 and UL34 homologs, two critical regulators of capsid budding from nucleus to endoplasmic reticulum, thereby facilitating virion egress. Modulates and redistributes host components of the nuclear envelope, including LMNA, emerin/EMD and the nuclear matrix protein MATR3. Phosphorylates envelope glycoprotein B (gB), probably to direct it to the cell surface. Promotes virus intracellular spread by restructuring host cell cytoskeleton. Blocks host apoptosis to extend cell survival and allow efficient viral replication. Promotes viral gene expression by phosphorylating host HDAC2 to reduce viral genome silencing. The sequence is that of Serine/threonine-protein kinase US3 homolog (US1206) from Gallid herpesvirus 2 (strain GA) (GaHV-2).